The sequence spans 511 residues: Histidine ammonia-lyase (511 aa).

The 5-imidazolinone (Ala-Gly) cross-link spans 142-144; it reads ASG. Residue Ser143 is modified to 2,3-didehydroalanine (Ser).

It belongs to the PAL/histidase family. Post-translationally, contains an active site 4-methylidene-imidazol-5-one (MIO), which is formed autocatalytically by cyclization and dehydration of residues Ala-Ser-Gly.

Its subcellular location is the cytoplasm. The catalysed reaction is L-histidine = trans-urocanate + NH4(+). It participates in amino-acid degradation; L-histidine degradation into L-glutamate; N-formimidoyl-L-glutamate from L-histidine: step 1/3. The sequence is that of Histidine ammonia-lyase from Brucella abortus (strain S19).